The chain runs to 26 residues: Conotoxin Eb6.15 (26 aa).

Disulfide bonds link Cys-7/Cys-18 and Cys-13/Cys-25.

Belongs to the conotoxin O1 superfamily. As to expression, expressed by the venom duct.

It localises to the secreted. The protein is Conotoxin Eb6.15 (E1) of Conus ebraeus (Hebrew cone).